A 204-amino-acid chain; its full sequence is Proteasome subunit beta type-3-B (204 aa).

It belongs to the peptidase T1B family. In terms of assembly, component of the 20S core complex of the 26S proteasome. The 26S proteasome is composed of a core protease (CP), known as the 20S proteasome, capped at one or both ends by the 19S regulatory particle (RP/PA700). The 20S proteasome core is composed of 28 subunits that are arranged in four stacked rings, resulting in a barrel-shaped structure. The two end rings are each formed by seven alpha subunits, and the two central rings are each formed by seven beta subunits. The catalytic chamber with the active sites is on the inside of the barrel.

It localises to the cytoplasm. Its subcellular location is the nucleus. Functionally, non-catalytic component of the proteasome, a multicatalytic proteinase complex which is characterized by its ability to cleave peptides with Arg, Phe, Tyr, Leu, and Glu adjacent to the leaving group at neutral or slightly basic pH. The proteasome has an ATP-dependent proteolytic activity. The polypeptide is Proteasome subunit beta type-3-B (PBC2) (Arabidopsis thaliana (Mouse-ear cress)).